The primary structure comprises 117 residues: DNA polymerase epsilon subunit 4 (117 aa).

Residues 1-36 (MAAAAAAGSGTPREEEGPAGEAAASQPQAPTSVPGA) form a disordered region. At alanine 2 the chain carries N-acetylalanine. Threonine 11 carries the phosphothreonine modification. Residues 19 to 30 (AGEAAASQPQAP) show a composition bias toward low complexity. At serine 25 the chain carries Phosphoserine.

In terms of assembly, component of the DNA polymerase epsilon complex consisting of four subunits: the catalytic subunit POLE and the accessory subunits POLE2, POLE3 and POLE4. Interaction with POLE3 is a prerequisite for further binding with POLE and POLE2.

The protein resides in the nucleus. In terms of biological role, accessory component of the DNA polymerase epsilon complex. Participates in DNA repair and in chromosomal DNA replication. This is DNA polymerase epsilon subunit 4 (POLE4) from Homo sapiens (Human).